Consider the following 925-residue polypeptide: Nonribosomal peptide synthetase apvA (925 aa).

The segment at 15–436 (AREDSGHVVV…TGRAKENMII (422 aa)) is adenylation (A) domain. The 81-residue stretch at 564–644 (EPQNDLEKTL…DLATALEKLQ (81 aa)) folds into the Carrier domain. Position 601 is an O-(pantetheine 4'-phosphoryl)serine (Ser601). A thioesterase (TE) domain region spans residues 663–909 (PLWLVHPGAG…HYSMIGPDHV (247 aa)).

It belongs to the NRP synthetase family. ApvA specifically produces aspulvinone E in hyphea, in contrast to melA which produces aspulvinone E in conidia where it is converted to UV-protective Asp-melanin.

It carries out the reaction 2 3-(4-hydroxyphenyl)pyruvate + AH2 + 2 ATP + O2 = aspulvinone E + A + 2 AMP + CO2 + 2 diphosphate + H2O + H(+). Its pathway is secondary metabolite biosynthesis. Functionally, nonribosomal peptide synthetase; part of the gene cluster that mediates the biosynthesis of aspulvinones. The nonribosomal peptide synthetase apvA is responsible for the production of aspulvinone E, the core structure of aspulvinones. ApvA first activates 4-hydroxyphenylpyruvate (HPPA) through its A domain to AMP-HPPA. The HPPA unit is then loaded to the T domain and eventually transferred to the TE domain. Upon loading of another HPPA unit to the T domain, the TE domain promotes the enolate formation on the unit attached. The next step involves head to tail Claisen condensation, followed by the keto-enol tautermerization and a nucleophilic attack on the carbonyl carbon to yield the furanone partial structure. A spontaneous oxidation at the beta-carbon of the thioester might occur in aerobic condition. The TE domain then catalyzes the hydrolysis of the thioester, followed by spontaneous decarboxylation, dehydroxylation and keto-enol tautermerization to give the aspulvinone core. Aspulvinone E is highly unstable and converted to isoaspulvinone E in the presence of light. The structural diversity of the aspulvinones suggests that other tailoring enzymes are involved and have still to be identified. In Aspergillus terreus (strain NIH 2624 / FGSC A1156), this protein is Nonribosomal peptide synthetase apvA.